The chain runs to 648 residues: Threonine--tRNA ligase (648 aa).

Residues 1–63 (MAQISLTFPD…HADATIAIHT (63 aa)) form the TGS domain. Residues 247-544 (DHRKLGREMD…LIENSAGKLP (298 aa)) form a catalytic region. Positions 344, 395, and 521 each coordinate Zn(2+).

This sequence belongs to the class-II aminoacyl-tRNA synthetase family. In terms of assembly, homodimer. Zn(2+) is required as a cofactor.

Its subcellular location is the cytoplasm. It catalyses the reaction tRNA(Thr) + L-threonine + ATP = L-threonyl-tRNA(Thr) + AMP + diphosphate + H(+). Its function is as follows. Catalyzes the attachment of threonine to tRNA(Thr) in a two-step reaction: L-threonine is first activated by ATP to form Thr-AMP and then transferred to the acceptor end of tRNA(Thr). Also edits incorrectly charged L-seryl-tRNA(Thr). The chain is Threonine--tRNA ligase from Roseobacter denitrificans (strain ATCC 33942 / OCh 114) (Erythrobacter sp. (strain OCh 114)).